Consider the following 858-residue polypeptide: G2-specific protein kinase nim-1 (858 aa).

The region spanning 7 to 290 (YELLEKIGHG…TATLLNLPIV (284 aa)) is the Protein kinase domain. ATP is bound by residues 13–21 (IGHGSFGII) and K36. The Proton acceptor role is filled by D161. Residue T194 is modified to Phosphothreonine; by autocatalysis. Residues 291–383 (RLMRKEKEVV…QARVEAELQR (93 aa)) adopt a coiled-coil conformation. Disordered stretches follow at residues 495–693 (TKAP…LPQA) and 747–858 (SAVD…LSQS). Over residues 516–525 (SNWEVPRETE) the composition is skewed to basic and acidic residues. The segment covering 526–535 (MIDSGDESEA) has biased composition (acidic residues). Composition is skewed to polar residues over residues 548 to 572 (SSKN…NSNV) and 580 to 598 (SKQT…SSIG). Residues 636 to 648 (SANNINNSSNGGS) are compositionally biased toward low complexity. Positions 650–661 (APSSTVTSNITV) are enriched in polar residues. The span at 676–691 (SSFSQQQNNQPQQSLP) shows a compositional bias: low complexity. A compositionally biased stretch (polar residues) spans 760–780 (GQSQLPTRPRSQPQPITANFE). The segment covering 781–802 (QQQQQQQSNTNSISSSNSAGSG) has biased composition (low complexity).

This sequence belongs to the protein kinase superfamily. CAMK Ser/Thr protein kinase family.

The protein resides in the nucleus. The enzyme catalyses L-seryl-[protein] + ATP = O-phospho-L-seryl-[protein] + ADP + H(+). It catalyses the reaction L-threonyl-[protein] + ATP = O-phospho-L-threonyl-[protein] + ADP + H(+). Protein kinase that plays an important role in mitotic regulation. This is G2-specific protein kinase nim-1 (nim-1) from Neurospora crassa (strain ATCC 24698 / 74-OR23-1A / CBS 708.71 / DSM 1257 / FGSC 987).